Consider the following 565-residue polypeptide: NAD-dependent malic enzyme (565 aa).

Catalysis depends on Tyr104, which acts as the Proton donor. NAD(+) is bound at residue Arg157. The active-site Proton acceptor is the Lys175. A divalent metal cation-binding residues include Glu246, Asp247, and Asp270. 2 residues coordinate NAD(+): Asp270 and Asn418.

This sequence belongs to the malic enzymes family. Homotetramer. Mg(2+) is required as a cofactor. Mn(2+) serves as cofactor.

It catalyses the reaction (S)-malate + NAD(+) = pyruvate + CO2 + NADH. It carries out the reaction oxaloacetate + H(+) = pyruvate + CO2. This chain is NAD-dependent malic enzyme, found in Escherichia coli (strain SMS-3-5 / SECEC).